Reading from the N-terminus, the 102-residue chain is Complement inhibitor RaCI3 (102 aa).

The first 24 residues, 1-24, serve as a signal peptide directing secretion; sequence MAALNGLVLLLLTISAMFISECYS. Intrachain disulfides connect cysteine 37/cysteine 61, cysteine 42/cysteine 63, and cysteine 57/cysteine 78.

Belongs to the RaCI family. In terms of tissue distribution, expressed in salivary glands.

The protein resides in the secreted. Its function is as follows. Complement inhibitor. Prevents complement-mediated C5 activation by binding to C5. Binds C5 at a different binding site than the other tick complement inhibitors OmCI and CirpT1, and the drug eculizumab. Inhibits complement in human and guinea pig but not in other species tested (rabbit, rat, mouse, and pig). In Dermacentor andersoni (Rocky mountain wood tick), this protein is Complement inhibitor RaCI3.